Reading from the N-terminus, the 215-residue chain is MSDNAQLTGLCDRFRGFYPVVIDVETAGFNAKTDALLEIAAITLKMDEQGWLMPDTTLHFHVEPFVGANLQPEALAFNGIDPNDPDRGAVSEYEALHEIFKVVRKGIKASGCNRAIMVAHNANFDHSFMMAAAERASLKRNPFHPFATFDTAALAGLALGQTVLSKACQTAGMDFDSTQAHSALYDTERTAVLFCEIVNRWKRLGGWPLSAAEEV.

One can recognise an Exonuclease domain in the interval valine 20–phenylalanine 194. Residues aspartate 23, glutamate 25, histidine 181, and aspartate 186 each contribute to the Mg(2+) site. Catalysis depends on histidine 181, which acts as the Proton donor/acceptor.

Belongs to the RNase T family. In terms of assembly, homodimer. Mg(2+) serves as cofactor.

Trims short 3' overhangs of a variety of RNA species, leaving a one or two nucleotide 3' overhang. Responsible for the end-turnover of tRNA: specifically removes the terminal AMP residue from uncharged tRNA (tRNA-C-C-A). Also appears to be involved in tRNA biosynthesis, especially in strains lacking other exoribonucleases. Its function is as follows. A general regulator of small RNAs (sRNA), contributes to their degradation. Upon overexpression suppresses sRNA-mediated RhyB-silencing of multiple RNA targets; overexpression leads to nearly complete loss of RhyB sRNA. The protein is Ribonuclease T of Escherichia coli (strain K12).